A 359-amino-acid chain; its full sequence is Photosystem II protein D1 1 (359 aa).

A run of 3 helical transmembrane segments spans residues 29–46 (YVGWFGVLMIPTLLAATT), 118–133 (HFLIGIYAYMGREWEL), and 142–156 (WICIAYSAPVAAASA). Residue histidine 118 coordinates chlorophyll a. Residue tyrosine 126 participates in pheophytin a binding. [CaMn4O5] cluster-binding residues include aspartate 170 and glutamate 189. Residues 197 to 218 (FHMLGVAGVFGGSLFSAMHGSL) form a helical membrane-spanning segment. Residue histidine 198 coordinates chlorophyll a. Residues histidine 215 and 264–265 (SF) contribute to the a quinone site. Residue histidine 215 participates in Fe cation binding. Histidine 272 contributes to the Fe cation binding site. Residues 274–288 (FLAAWPVVGIWFTAL) form a helical membrane-spanning segment. Residues histidine 332, glutamate 333, aspartate 342, and alanine 344 each coordinate [CaMn4O5] cluster. Residues 345 to 359 (AAESAPVALQAPAIG) constitute a propeptide that is removed on maturation.

It belongs to the reaction center PufL/M/PsbA/D family. As to quaternary structure, PSII is composed of 1 copy each of membrane proteins PsbA, PsbB, PsbC, PsbD, PsbE, PsbF, PsbH, PsbI, PsbJ, PsbK, PsbL, PsbM, PsbT, PsbX, PsbY, PsbZ, Psb30/Ycf12, peripheral proteins PsbO, CyanoQ (PsbQ), PsbU, PsbV and a large number of cofactors. It forms dimeric complexes. The D1/D2 heterodimer binds P680, chlorophylls that are the primary electron donor of PSII, and subsequent electron acceptors. It shares a non-heme iron and each subunit binds pheophytin, quinone, additional chlorophylls, carotenoids and lipids. D1 provides most of the ligands for the Mn4-Ca-O5 cluster of the oxygen-evolving complex (OEC). There is also a Cl(-1) ion associated with D1 and D2, which is required for oxygen evolution. The PSII complex binds additional chlorophylls, carotenoids and specific lipids. is required as a cofactor. Tyr-161 forms a radical intermediate that is referred to as redox-active TyrZ, YZ or Y-Z. In terms of processing, C-terminally processed by CtpA; processing is essential to allow assembly of the oxygen-evolving complex and thus photosynthetic growth.

Its subcellular location is the cellular thylakoid membrane. The enzyme catalyses 2 a plastoquinone + 4 hnu + 2 H2O = 2 a plastoquinol + O2. In terms of biological role, photosystem II (PSII) is a light-driven water:plastoquinone oxidoreductase that uses light energy to abstract electrons from H(2)O, generating O(2) and a proton gradient subsequently used for ATP formation. It consists of a core antenna complex that captures photons, and an electron transfer chain that converts photonic excitation into a charge separation. The D1/D2 (PsbA/PsbD) reaction center heterodimer binds P680, the primary electron donor of PSII as well as several subsequent electron acceptors. In Synechococcus sp. (strain RCC307), this protein is Photosystem II protein D1 1.